The chain runs to 681 residues: MNISKAKLLLLPPPLTPKLNRSLYSHSQRRTRSLPHHRDKPINWNSTHSFVLHNPLLSLLEKCKLLLHLKQIQAQMIINGLILDPFASSRLIAFCALSESRYLDYSVKILKGIENPNIFSWNVTIRGFSESENPKESFLLYKQMLRHGCCESRPDHFTYPVLFKVCADLRLSSLGHMILGHVLKLRLELVSHVHNASIHMFASCGDMENARKVFDESPVRDLVSWNCLINGYKKIGEAEKAIYVYKLMESEGVKPDDVTMIGLVSSCSMLGDLNRGKEFYEYVKENGLRMTIPLVNALMDMFSKCGDIHEARRIFDNLEKRTIVSWTTMISGYARCGLLDVSRKLFDDMEEKDVVLWNAMIGGSVQAKRGQDALALFQEMQTSNTKPDEITMIHCLSACSQLGALDVGIWIHRYIEKYSLSLNVALGTSLVDMYAKCGNISEALSVFHGIQTRNSLTYTAIIGGLALHGDASTAISYFNEMIDAGIAPDEITFIGLLSACCHGGMIQTGRDYFSQMKSRFNLNPQLKHYSIMVDLLGRAGLLEEADRLMESMPMEADAAVWGALLFGCRMHGNVELGEKAAKKLLELDPSDSGIYVLLDGMYGEANMWEDAKRARRMMNERGVEKIPGCSSIEVNGIVCEFIVRDKSRPESEKIYDRLHCLGRHMRSSLSVLFSEYEITNN.

The transit peptide at 1–32 (MNISKAKLLLLPPPLTPKLNRSLYSHSQRRTR) directs the protein to the mitochondrion. PPR repeat units lie at residues 117-151 (NIFS…GCCE), 155-189 (DHFT…RLEL), 190-220 (VSHV…SPVR), 221-255 (DLVS…GVKP), 256-290 (DDVT…GLRM), 291-321 (TIPL…LEKR), 322-356 (TIVS…DVVL), 357-387 (WNAM…NTKP), 388-422 (DEIT…SLSL), 423-453 (NVAL…IQTR), 454-488 (NSLT…GIAP), 489-519 (DEIT…MKSR), and 525-555 (QLKH…MPME). A type E motif region spans residues 560–635 (VWGALLFGCR…IPGCSSIEVN (76 aa)). Residues 636 to 666 (GIVCEFIVRDKSRPESEKIYDRLHCLGRHMR) are type E(+) motif.

The protein belongs to the PPR family. PCMP-E subfamily.

It localises to the mitochondrion. The sequence is that of Pentatricopeptide repeat-containing protein At2g22410, mitochondrial (PCMP-E28) from Arabidopsis thaliana (Mouse-ear cress).